Here is a 342-residue protein sequence, read N- to C-terminus: Aquaporin-7 (342 aa).

Over 1-36 (MVQASGHRRSTRGSKMVSWSVIAKIQEILQRKMVRE) the chain is Cytoplasmic. The residue at position 20 (Ser20) is a Phosphoserine. Residues 37–54 (FLAEFMSTYVMMVFGLGS) form a helical membrane-spanning segment. The Extracellular segment spans residues 55 to 67 (VAHMVLNKKYGSY). The helical transmembrane segment at 68–85 (LGVNLGFGFGVTMGVHVA) threads the bilayer. Residues 86–89 (GRIS) are Cytoplasmic-facing. The segment at residues 90 to 103 (GAHMNAAVTFANCA) is an intramembrane region (discontinuously helical). Positions 94–96 (NAA) match the NPA 1 motif. The Cytoplasmic portion of the chain corresponds to 104 to 111 (LGRVPWRK). A helical transmembrane segment spans residues 112–132 (FPVYVLGQFLGSFLAAATIYS). Over 133–170 (LFYTAILHFSGGQLMVTGPVATAGIFATYLPDHMTLWR) the chain is Extracellular. A helical membrane pass occupies residues 171–188 (GFLNEAWLTGMLQLCLFA). The Cytoplasmic portion of the chain corresponds to 189-200 (ITDQENNPALPG). Residues 201–217 (TEALVIGILVVIIGVSL) traverse the membrane as a helical segment. Residues 218 to 221 (GMNT) are Extracellular-facing. The discontinuously helical intramembrane region spans 222 to 235 (GYAINPSRDLPPRI). Positions 226 to 228 (NPS) match the NPA 2 motif. The Extracellular portion of the chain corresponds to 236 to 253 (FTFIAGWGKQVFSNGENW). A helical membrane pass occupies residues 254-275 (WWVPVVAPLLGAYLGGIIYLVF). Over 276–342 (IGSTIPREPL…LHESMALEHF (67 aa)) the chain is Cytoplasmic.

Belongs to the MIP/aquaporin (TC 1.A.8) family. Homotetramer; each monomer provides an independent glycerol/water pore. Two homotetramers on opposing membranes can dimerize, forming a cell-cell junction. Interacts with PLIN1. Post-translationally, phosphorylation by PKA could prevent the interaction with PLIN1. Detected in the sperm head (at protein level). Detected in white adipose tissue.

The protein localises to the cell membrane. It localises to the cytoplasmic vesicle membrane. Its subcellular location is the lipid droplet. The enzyme catalyses glycerol(in) = glycerol(out). It carries out the reaction H2O(in) = H2O(out). It catalyses the reaction urea(in) = urea(out). Glycerol transport is regulated by pH, with the porin being permeable to glycerol at pH 7.4 but not at pH 5.5. Water permeability, however, is not influenced by pH. Inhibited by mercury ions. Aquaglyceroporins form homotetrameric transmembrane channels, with each monomer independently mediating glycerol and water transport across the plasma membrane along their osmotic gradient. Could also be permeable to urea. Mediates the efflux of glycerol, formed upon triglyceride hydrolysis, to avoid its accumulation in adipocytes and to make it available to other tissues. In the kidney, mediates the reabsorption of glycerol, preventing its loss in urine, again participating to energy homeostasis. In pancreatic beta cells, it also mediates the efflux of glycerol, regulating its intracellular levels. The polypeptide is Aquaporin-7 (Homo sapiens (Human)).